A 341-amino-acid polypeptide reads, in one-letter code: Ribosomal RNA small subunit methyltransferase C (341 aa).

This sequence belongs to the methyltransferase superfamily. RsmC family. Monomer.

The protein resides in the cytoplasm. The enzyme catalyses guanosine(1207) in 16S rRNA + S-adenosyl-L-methionine = N(2)-methylguanosine(1207) in 16S rRNA + S-adenosyl-L-homocysteine + H(+). Specifically methylates the guanine in position 1207 of 16S rRNA in the 30S particle. The protein is Ribosomal RNA small subunit methyltransferase C of Shewanella amazonensis (strain ATCC BAA-1098 / SB2B).